The sequence spans 219 residues: Germin-like protein subfamily 2 member 1 (219 aa).

A signal peptide spans 1-21 (MASPTLTLLLLLTTVSFFISS). Cys-32 and Cys-47 are disulfide-bonded. In terms of domain architecture, Cupin type-1 spans 61–209 (QGLAKPGLTN…AFQTSPGTVK (149 aa)). The N-linked (GlcNAc...) asparagine glycan is linked to Asn-70. Residues His-109, His-111, Glu-116, and His-155 each coordinate Mn(2+).

It belongs to the germin family. As to quaternary structure, oligomer (believed to be a pentamer but probably hexamer).

It is found in the secreted. It localises to the extracellular space. The protein localises to the apoplast. Its function is as follows. May play a role in plant defense. Probably has no oxalate oxidase activity even if the active site is conserved. The protein is Germin-like protein subfamily 2 member 1 (GLP4) of Arabidopsis thaliana (Mouse-ear cress).